Here is a 1400-residue protein sequence, read N- to C-terminus: DNA-directed RNA polymerase subunit beta' (1400 aa).

Zn(2+) contacts are provided by Cys71, Cys73, Cys86, and Cys89. Residues Asp462, Asp464, and Asp466 each contribute to the Mg(2+) site. 4 residues coordinate Zn(2+): Cys811, Cys885, Cys892, and Cys895.

It belongs to the RNA polymerase beta' chain family. The RNAP catalytic core consists of 2 alpha, 1 beta, 1 beta' and 1 omega subunit. When a sigma factor is associated with the core the holoenzyme is formed, which can initiate transcription. Requires Mg(2+) as cofactor. Zn(2+) is required as a cofactor.

It carries out the reaction RNA(n) + a ribonucleoside 5'-triphosphate = RNA(n+1) + diphosphate. Functionally, DNA-dependent RNA polymerase catalyzes the transcription of DNA into RNA using the four ribonucleoside triphosphates as substrates. The polypeptide is DNA-directed RNA polymerase subunit beta' (Brucella abortus (strain S19)).